The primary structure comprises 158 residues: Cystin-1 (158 aa).

The tract at residues 1 to 146 (MGSGSSRSSR…AAISYDHSEE (146 aa)) is disordered. A lipid anchor (N-myristoyl glycine) is attached at Gly2. 2 stretches are compositionally biased toward low complexity: residues 19–32 (ESLPAGPGAAALEG) and 39–52 (PVAAAEVPGAAAEE). The Ciliary targeting motif motif lies at 29 to 33 (ALEGG). Positions 65 to 75 (DGRDETLRLLD) are enriched in basic and acidic residues.

Interacts (when myristoylated) with UNC119 and UNC119B; interaction is required for localization to cilium. In terms of tissue distribution, expressed at high levels in the kidney and pancreas. Moderate expression seen in the skeletal muscle, liver and heart. A weak expression seen in the brain, lung, uterus, prostate, testis, small intestine and colon.

The protein localises to the cell projection. It is found in the cilium membrane. The protein resides in the cytoplasm. It localises to the cytoskeleton. Its subcellular location is the cilium axoneme. The polypeptide is Cystin-1 (CYS1) (Homo sapiens (Human)).